Here is a 587-residue protein sequence, read N- to C-terminus: 5-aminolevulinate synthase, erythroid-specific, mitochondrial (587 aa).

The N-terminal 49 residues, 1–49 (MVTAAMLLQCCPVLARGPTSLLGKVVKTHQFLFGIGRCPILATQGPNCS), are a transit peptide targeting the mitochondrion. Arg-163 contacts succinyl-CoA. Pyridoxal 5'-phosphate is bound by residues Cys-258 and Phe-259. Ser-280 and Lys-299 together coordinate succinyl-CoA. Pyridoxal 5'-phosphate is bound by residues Ser-332, His-360, and Thr-388. The active site involves Lys-391. Residue Lys-391 is modified to N6-(pyridoxal phosphate)lysine. Residues Thr-420 and Thr-421 each coordinate pyridoxal 5'-phosphate. Thr-508 lines the succinyl-CoA pocket.

This sequence belongs to the class-II pyridoxal-phosphate-dependent aminotransferase family. In terms of assembly, homodimer. Interacts with SUCLA2. As to quaternary structure, interacts with SUCLA2. Requires pyridoxal 5'-phosphate as cofactor. As to expression, erythroid-specific.

Its subcellular location is the mitochondrion inner membrane. It carries out the reaction succinyl-CoA + glycine + H(+) = 5-aminolevulinate + CO2 + CoA. It participates in porphyrin-containing compound metabolism; protoporphyrin-IX biosynthesis; 5-aminolevulinate from glycine: step 1/1. With respect to regulation, down-regulated by itaconyl-CoA which acts as a competitive inhibitor of succinyl-CoA substrate. In terms of biological role, catalyzes the pyridoxal 5'-phosphate (PLP)-dependent condensation of succinyl-CoA and glycine to form aminolevulinic acid (ALA), with CoA and CO2 as by-products. Contributes significantly to heme formation during erythropoiesis. Its function is as follows. Catalyzes the pyridoxal 5'-phosphate (PLP)-dependent condensation of succinyl-CoA and glycine to form aminolevulinic acid (ALA), with CoA and CO2 as by-products. Catalytic activity is 75-85% of isoform 1 activity. Catalyzes the pyridoxal 5'-phosphate (PLP)-dependent condensation of succinyl-CoA and glycine to form aminolevulinic acid (ALA), with CoA and CO2 as by-products. Catalytic activity is 65-75% of isoform 1 activity. This Homo sapiens (Human) protein is 5-aminolevulinate synthase, erythroid-specific, mitochondrial.